The following is a 107-amino-acid chain: MLSGEAEQLRLKHLVHCRRHKCFARDSGEFCYFELPEDHIEGPAHGVRLTAQGELARSLIREFTQRPLLVERDRGPCVLTVICNCPNLGLHQDLCCHLCAEYNKYRN.

This sequence belongs to the adenoviridae E3A-2 family.

Not yet known. The polypeptide is Early E3A 12.5 kDa protein (Human adenovirus C serotype 5 (HAdV-5)).